Reading from the N-terminus, the 243-residue chain is Pyridoxine 5'-phosphate synthase (243 aa).

Asn-9 contacts 3-amino-2-oxopropyl phosphate. 11 to 12 serves as a coordination point for 1-deoxy-D-xylulose 5-phosphate; sequence DH. Arg-20 is a 3-amino-2-oxopropyl phosphate binding site. His-45 serves as the catalytic Proton acceptor. Residues Arg-47 and His-52 each coordinate 1-deoxy-D-xylulose 5-phosphate. Glu-72 (proton acceptor) is an active-site residue. Thr-102 serves as a coordination point for 1-deoxy-D-xylulose 5-phosphate. His-193 (proton donor) is an active-site residue. Residues Gly-194 and 215–216 contribute to the 3-amino-2-oxopropyl phosphate site; that span reads GH.

Belongs to the PNP synthase family. Homooctamer; tetramer of dimers.

The protein resides in the cytoplasm. The enzyme catalyses 3-amino-2-oxopropyl phosphate + 1-deoxy-D-xylulose 5-phosphate = pyridoxine 5'-phosphate + phosphate + 2 H2O + H(+). It participates in cofactor biosynthesis; pyridoxine 5'-phosphate biosynthesis; pyridoxine 5'-phosphate from D-erythrose 4-phosphate: step 5/5. Its function is as follows. Catalyzes the complicated ring closure reaction between the two acyclic compounds 1-deoxy-D-xylulose-5-phosphate (DXP) and 3-amino-2-oxopropyl phosphate (1-amino-acetone-3-phosphate or AAP) to form pyridoxine 5'-phosphate (PNP) and inorganic phosphate. This is Pyridoxine 5'-phosphate synthase from Salmonella paratyphi A (strain ATCC 9150 / SARB42).